A 336-amino-acid polypeptide reads, in one-letter code: uncharacterized protein (336 aa).

A disordered region spans residues 162–195 (ARGLPVHSSFKQNNSSQTSSNKGTTTVAAGSGSD). The span at 169 to 187 (SSFKQNNSSQTSSNKGTTT) shows a compositional bias: low complexity.

The protein belongs to the AHA1 family.

This is an uncharacterized protein from Schizosaccharomyces pombe (strain 972 / ATCC 24843) (Fission yeast).